A 273-amino-acid chain; its full sequence is 4-hydroxy-tetrahydrodipicolinate reductase (273 aa).

NAD(+) is bound by residues 12 to 17 and Glu-38; that span reads GAGGRM. Arg-39 contacts NADP(+). NAD(+) is bound by residues 102 to 104 and 126 to 129; these read GTT and AANF. His-159 functions as the Proton donor/acceptor in the catalytic mechanism. A (S)-2,3,4,5-tetrahydrodipicolinate-binding site is contributed by His-160. Catalysis depends on Lys-163, which acts as the Proton donor. Residue 169 to 170 coordinates (S)-2,3,4,5-tetrahydrodipicolinate; sequence GT.

This sequence belongs to the DapB family. Homotetramer.

It localises to the cytoplasm. The enzyme catalyses (S)-2,3,4,5-tetrahydrodipicolinate + NAD(+) + H2O = (2S,4S)-4-hydroxy-2,3,4,5-tetrahydrodipicolinate + NADH + H(+). It carries out the reaction (S)-2,3,4,5-tetrahydrodipicolinate + NADP(+) + H2O = (2S,4S)-4-hydroxy-2,3,4,5-tetrahydrodipicolinate + NADPH + H(+). It participates in amino-acid biosynthesis; L-lysine biosynthesis via DAP pathway; (S)-tetrahydrodipicolinate from L-aspartate: step 4/4. Its function is as follows. Catalyzes the conversion of 4-hydroxy-tetrahydrodipicolinate (HTPA) to tetrahydrodipicolinate. The chain is 4-hydroxy-tetrahydrodipicolinate reductase from Salmonella agona (strain SL483).